A 223-amino-acid polypeptide reads, in one-letter code: Exosome complex component RRP46 (223 aa).

This sequence belongs to the RNase PH family. In terms of assembly, component of the RNA exosome complex. Specifically part of the catalytically inactive RNA exosome core complex (Exo-9) which may associate with the catalytic subunits RRP6 and DIS3 in cytoplasmic- and nuclear-specific RNA exosome complex forms. Exo-9 is formed by a hexameric base ring of RNase PH domain-containing subunits and a cap ring consisting of CSL4, RRP4 and RRP40.

Its subcellular location is the cytoplasm. The protein resides in the nucleus. It is found in the nucleolus. Non-catalytic component of the RNA exosome complex which has 3'-&gt;5' exoribonuclease activity and participates in a multitude of cellular RNA processing and degradation events. In the nucleus, the RNA exosome complex is involved in proper maturation of stable RNA species such as rRNA, snRNA and snoRNA, in the elimination of RNA processing by-products and non-coding 'pervasive' transcripts, such as antisense RNA species and cryptic unstable transcripts (CUTs), and of mRNAs with processing defects, thereby limiting or excluding their export to the cytoplasm. In the cytoplasm, the RNA exosome complex is involved in general mRNA turnover and in RNA surveillance pathways, preventing translation of aberrant mRNAs. The catalytic inactive RNA exosome core complex of 9 subunits (Exo-9) is proposed to play a pivotal role in the binding and presentation of RNA for ribonucleolysis, and to serve as a scaffold for the association with catalytic subunits and accessory proteins or complexes. RRP46 is part of the hexameric ring of RNase PH domain-containing subunits proposed to form a central channel which threads RNA substrates for degradation. The protein is Exosome complex component RRP46 (RRP46) of Saccharomyces cerevisiae (strain ATCC 204508 / S288c) (Baker's yeast).